A 463-amino-acid chain; its full sequence is uncharacterized protein (463 aa).

It belongs to the UbiD family.

This is an uncharacterized protein from Rhodospirillum rubrum.